Reading from the N-terminus, the 323-residue chain is Beta-ketoacyl-[acyl-carrier-protein] synthase III (323 aa).

Residues C113 and H250 contribute to the active site. Residues 251-255 (QANKR) form an ACP-binding region. The active site involves N280.

Belongs to the thiolase-like superfamily. FabH family. As to quaternary structure, homodimer.

It localises to the cytoplasm. It carries out the reaction malonyl-[ACP] + acetyl-CoA + H(+) = 3-oxobutanoyl-[ACP] + CO2 + CoA. Its pathway is lipid metabolism; fatty acid biosynthesis. Its function is as follows. Catalyzes the condensation reaction of fatty acid synthesis by the addition to an acyl acceptor of two carbons from malonyl-ACP. Catalyzes the first condensation reaction which initiates fatty acid synthesis and may therefore play a role in governing the total rate of fatty acid production. Possesses both acetoacetyl-ACP synthase and acetyl transacylase activities. Its substrate specificity determines the biosynthesis of branched-chain and/or straight-chain of fatty acids. The polypeptide is Beta-ketoacyl-[acyl-carrier-protein] synthase III (Brucella melitensis biotype 2 (strain ATCC 23457)).